The sequence spans 407 residues: Formamidase (407 aa).

In terms of assembly, homotrimer.

It carries out the reaction formamide + H2O = formate + NH4(+). Functionally, hydrolyzes formamide with the production of ammonia which can be used as a source of nitrogen for growth. Also acts, more slowly, on acetamide, propanamide and butanamide. The chain is Formamidase (fmdA) from Methylophilus methylotrophus (Bacterium W3A1).